The sequence spans 80 residues: Exodeoxyribonuclease 7 small subunit (80 aa).

Belongs to the XseB family. In terms of assembly, heterooligomer composed of large and small subunits.

Its subcellular location is the cytoplasm. The catalysed reaction is Exonucleolytic cleavage in either 5'- to 3'- or 3'- to 5'-direction to yield nucleoside 5'-phosphates.. Functionally, bidirectionally degrades single-stranded DNA into large acid-insoluble oligonucleotides, which are then degraded further into small acid-soluble oligonucleotides. The chain is Exodeoxyribonuclease 7 small subunit from Streptomyces avermitilis (strain ATCC 31267 / DSM 46492 / JCM 5070 / NBRC 14893 / NCIMB 12804 / NRRL 8165 / MA-4680).